Consider the following 418-residue polypeptide: Voltage-gated ClC-type chloride channel ClcB (418 aa).

Position 1 (methionine 1) is a topological domain, cytoplasmic. A helical membrane pass occupies residues 2-22 (FHRLLIATVVGILAAFAVAGF). Residues 23–53 (RHAMLLLEWLFLNNDSGSLVNAATNLSPWRR) are Periplasmic-facing. A helical transmembrane segment spans residues 54–74 (LLTPALGGLAAGLLLMGWQKF). Residues 75-145 (TQQRPHAPTD…QRFTPRQEWK (71 aa)) are Cytoplasmic-facing. A helical transmembrane segment spans residues 146 to 166 (LWIACGAAAGMAAAYRAPLAG). Topologically, residues 167 to 177 (SLFIAEVLFGT) are periplasmic. The chain crosses the membrane as a helical span at residues 178 to 200 (MMLASLGPVIISAVVALLVSNLI). Over 201–221 (NHSDALLYNVQLSVTVQARDY) the chain is Cytoplasmic. Residues 222–242 (ALIISTGVLAGLCGPLLLTLM) form a helical membrane-spanning segment. At 243–257 (NACHRGFVSLKLAPP) the chain is on the periplasmic side. A helical membrane pass occupies residues 258 to 278 (WQLALGGLIVGLLSLFTPAVW). Over 279 to 290 (GNGYSTVQSFLT) the chain is Cytoplasmic. The helical transmembrane segment at 291–311 (APPLLMIIAGIFLCKLCAVLA) threads the bilayer. The Periplasmic segment spans residues 312–315 (SSGS). A helical membrane pass occupies residues 316 to 336 (GAPGGVFTPTLFIGLAIGMLY). Residues 337–351 (GRSLGLWFPDGEEIT) are Cytoplasmic-facing. A helical membrane pass occupies residues 352–372 (LLLGLTGMATLLAATTHAPIM). The Periplasmic portion of the chain corresponds to 373-379 (STLMICE). Residues 380–400 (MTGEYQLLPGLLIACVIASVI) traverse the membrane as a helical segment. Residues 401–418 (SRTLHRDSIYRQHTAQHS) lie on the Cytoplasmic side of the membrane.

The protein belongs to the chloride channel (TC 2.A.49) family. ClcB subfamily.

It is found in the cell inner membrane. Probably acts as an electrical shunt for an outwardly-directed proton pump that is linked to amino acid decarboxylation, as part of the extreme acid resistance (XAR) response. In Escherichia coli (strain K12), this protein is Voltage-gated ClC-type chloride channel ClcB (clcB).